The primary structure comprises 329 residues: NADH-quinone oxidoreductase subunit H 1 (329 aa).

Helical transmembrane passes span 12–32 (LAKI…LVFA), 78–98 (WLFY…FAVI), 120–140 (VGLL…ALGG), 159–179 (LISY…LAGS), 191–211 (GIWF…SIAA), 242–262 (LFFV…TTFF), 270–290 (WLPP…FFIW), and 308–328 (WKVL…ILML).

The protein belongs to the complex I subunit 1 family. As to quaternary structure, NDH-1 is composed of 14 different subunits. Subunits NuoA, H, J, K, L, M, N constitute the membrane sector of the complex.

The protein localises to the cell inner membrane. The enzyme catalyses a quinone + NADH + 5 H(+)(in) = a quinol + NAD(+) + 4 H(+)(out). Functionally, NDH-1 shuttles electrons from NADH, via FMN and iron-sulfur (Fe-S) centers, to quinones in the respiratory chain. The immediate electron acceptor for the enzyme in this species is believed to be ubiquinone. Couples the redox reaction to proton translocation (for every two electrons transferred, four hydrogen ions are translocated across the cytoplasmic membrane), and thus conserves the redox energy in a proton gradient. This subunit may bind ubiquinone. This is NADH-quinone oxidoreductase subunit H 1 from Geobacter metallireducens (strain ATCC 53774 / DSM 7210 / GS-15).